The sequence spans 61 residues: Temporin-SN2 (61 aa).

The N-terminal stretch at 1–22 is a signal peptide; that stretch reads MFTLKKTLLLLFFLGTINLSLC. A propeptide spans 23-44 (removed in mature form); it reads EEERNAEEERRDGDDEMDVEVK. Lys61 carries the lysine amide modification.

Belongs to the frog skin active peptide (FSAP) family. Temporin subfamily. Expressed by the skin glands.

The protein localises to the secreted. Its function is as follows. Antimicrobial peptide. Active against some Gram-positive and Gram-negative bacterial strains. Active against fungus C.glabrata 090902 but not against C.albicans ATCC 12231. Shows very weak hemolytic activity against human erythrocytes. This chain is Temporin-SN2, found in Sylvirana spinulosa (Fine-spined frog).